The primary structure comprises 616 residues: Chaperone protein HtpG (616 aa).

The segment at 1–333 (MKKQFDTEVN…CQDLPLNVSR (333 aa)) is a; substrate-binding. Positions 334–542 (EILQQNKILS…SNDPTYQMQK (209 aa)) are b. Positions 543–616 (IMLSMGQEVK…INEFLEKDLL (74 aa)) are c.

This sequence belongs to the heat shock protein 90 family. Homodimer.

It is found in the cytoplasm. Molecular chaperone. Has ATPase activity. The chain is Chaperone protein HtpG from Borreliella afzelii (strain PKo) (Borrelia afzelii).